The following is a 97-amino-acid chain: Putative pterin-4-alpha-carbinolamine dehydratase (97 aa).

This sequence belongs to the pterin-4-alpha-carbinolamine dehydratase family.

It catalyses the reaction (4aS,6R)-4a-hydroxy-L-erythro-5,6,7,8-tetrahydrobiopterin = (6R)-L-erythro-6,7-dihydrobiopterin + H2O. The protein is Putative pterin-4-alpha-carbinolamine dehydratase of Brucella abortus (strain S19).